We begin with the raw amino-acid sequence, 66 residues long: U-scoloptoxin(24)-Er2a (66 aa).

The N-terminal stretch at 1 to 23 (MVKPLHCLIGIVLFLAVLNAGNG) is a signal peptide. Residues 43 to 66 (SLFHGNQRKKRSEEKRFSDMEQTK) form a disordered region. Residues 53-66 (RSEEKRFSDMEQTK) show a composition bias toward basic and acidic residues.

It belongs to the scoloptoxin-24 family. In terms of tissue distribution, expressed by the venom gland.

It localises to the secreted. The chain is U-scoloptoxin(24)-Er2a from Ethmostigmus rubripes (Giant centipede).